An 83-amino-acid polypeptide reads, in one-letter code: Large ribosomal subunit protein bL27 (83 aa).

The interval 1 to 25 is disordered; sequence MAHKKGQGASRNGRDSESKRLGLKV.

Belongs to the bacterial ribosomal protein bL27 family.

In Chlamydia trachomatis serovar L2 (strain ATCC VR-902B / DSM 19102 / 434/Bu), this protein is Large ribosomal subunit protein bL27.